Reading from the N-terminus, the 197-residue chain is Nucleoside triphosphate pyrophosphatase (197 aa).

Aspartate 74 functions as the Proton acceptor in the catalytic mechanism.

Belongs to the Maf family. The cofactor is a divalent metal cation.

The protein localises to the cytoplasm. It carries out the reaction a ribonucleoside 5'-triphosphate + H2O = a ribonucleoside 5'-phosphate + diphosphate + H(+). The enzyme catalyses a 2'-deoxyribonucleoside 5'-triphosphate + H2O = a 2'-deoxyribonucleoside 5'-phosphate + diphosphate + H(+). Its function is as follows. Nucleoside triphosphate pyrophosphatase. May have a dual role in cell division arrest and in preventing the incorporation of modified nucleotides into cellular nucleic acids. This is Nucleoside triphosphate pyrophosphatase from Granulibacter bethesdensis (strain ATCC BAA-1260 / CGDNIH1).